The sequence spans 229 residues: Phosphoglycolate phosphatase (229 aa).

The Nucleophile role is filled by Asp13. Residues Asp13, Asp15, and Asp178 each contribute to the Mg(2+) site.

It belongs to the HAD-like hydrolase superfamily. CbbY/CbbZ/Gph/YieH family. It depends on Mg(2+) as a cofactor.

The catalysed reaction is 2-phosphoglycolate + H2O = glycolate + phosphate. It functions in the pathway organic acid metabolism; glycolate biosynthesis; glycolate from 2-phosphoglycolate: step 1/1. In terms of biological role, specifically catalyzes the dephosphorylation of 2-phosphoglycolate. Is involved in the dissimilation of the intracellular 2-phosphoglycolate formed during the DNA repair of 3'-phosphoglycolate ends, a major class of DNA lesions induced by oxidative stress. The protein is Phosphoglycolate phosphatase of Photobacterium profundum (strain SS9).